Here is a 204-residue protein sequence, read N- to C-terminus: ATP-dependent Clp protease proteolytic subunit (204 aa).

S101 functions as the Nucleophile in the catalytic mechanism. The active site involves H126.

The protein belongs to the peptidase S14 family. In terms of assembly, component of the chloroplastic Clp protease core complex.

The protein localises to the plastid. It is found in the chloroplast stroma. The enzyme catalyses Hydrolysis of proteins to small peptides in the presence of ATP and magnesium. alpha-casein is the usual test substrate. In the absence of ATP, only oligopeptides shorter than five residues are hydrolyzed (such as succinyl-Leu-Tyr-|-NHMec, and Leu-Tyr-Leu-|-Tyr-Trp, in which cleavage of the -Tyr-|-Leu- and -Tyr-|-Trp bonds also occurs).. Cleaves peptides in various proteins in a process that requires ATP hydrolysis. Has a chymotrypsin-like activity. Plays a major role in the degradation of misfolded proteins. This chain is ATP-dependent Clp protease proteolytic subunit, found in Anthoceros angustus (Hornwort).